The primary structure comprises 477 residues: Glutamate--tRNA ligase 2 (477 aa).

The short motif at 12 to 22 (PSPTGRMHLGN) is the 'HIGH' region element. Positions 109, 111, 136, and 138 each coordinate Zn(2+). The short motif at 253-257 (PLSKR) is the 'KMSKS' region element. Lys256 provides a ligand contact to ATP.

It belongs to the class-I aminoacyl-tRNA synthetase family. Glutamate--tRNA ligase type 1 subfamily. In terms of assembly, monomer. Zn(2+) serves as cofactor.

It localises to the cytoplasm. The catalysed reaction is tRNA(Glu) + L-glutamate + ATP = L-glutamyl-tRNA(Glu) + AMP + diphosphate. In terms of biological role, catalyzes the attachment of glutamate to tRNA(Glu) in a two-step reaction: glutamate is first activated by ATP to form Glu-AMP and then transferred to the acceptor end of tRNA(Glu). The chain is Glutamate--tRNA ligase 2 from Alkalilimnicola ehrlichii (strain ATCC BAA-1101 / DSM 17681 / MLHE-1).